Reading from the N-terminus, the 466-residue chain is Ribosomal protein uS12 methylthiotransferase RimO (466 aa).

Residues 16–127 (PKVAFAHLGC…IVDVLQRVEA (112 aa)) form the MTTase N-terminal domain. C25, C61, C90, C165, C169, and C172 together coordinate [4Fe-4S] cluster. One can recognise a Radical SAM core domain in the interval 151–380 (TTDQAVAYLK…MALQQPIAAE (230 aa)). One can recognise a TRAM domain in the interval 383-454 (QRWVGKTVDV…IYDLTGHIVG (72 aa)).

Belongs to the methylthiotransferase family. RimO subfamily. It depends on [4Fe-4S] cluster as a cofactor.

It is found in the cytoplasm. It catalyses the reaction L-aspartate(89)-[ribosomal protein uS12]-hydrogen + (sulfur carrier)-SH + AH2 + 2 S-adenosyl-L-methionine = 3-methylsulfanyl-L-aspartate(89)-[ribosomal protein uS12]-hydrogen + (sulfur carrier)-H + 5'-deoxyadenosine + L-methionine + A + S-adenosyl-L-homocysteine + 2 H(+). Functionally, catalyzes the methylthiolation of an aspartic acid residue of ribosomal protein uS12. The protein is Ribosomal protein uS12 methylthiotransferase RimO of Synechococcus sp. (strain CC9902).